The following is a 38-amino-acid chain: RapG inhibitor (38 aa).

Residues 1–33 constitute a propeptide that is removed on maturation; that stretch reads MKRFLIGAGVAAVILSGWFIADHQTHSQEMKVA.

Belongs to the Phr family. Post-translationally, contains a predicted signal peptide cleavage site in the N-terminal region, however the propeptide is probably subject to only one processing event, at the N-terminal end of the mature peptide.

It is found in the secreted. It localises to the cytoplasm. Functionally, signaling molecule involved in the regulation of expression of DegU-controlled genes. Secreted during production, but the mature peptide acts intracellularly, indicating that it needs to be imported into the cell to function. Stimulates the DegU-dependent expression of aprE, an extracellular alkaline protease. Acts by inhibiting RapG activity. At high concentrations, represses the DegS-dependent aprE expression. The polypeptide is RapG inhibitor (phrG) (Bacillus subtilis (strain 168)).